The following is a 305-amino-acid chain: Guanine nucleotide-binding protein subunit beta (305 aa).

WD repeat units follow at residues 19 to 49 (NKLGKIPDIDISTDGKYLLSASTNDVLLVWD), 61 to 91 (APSVWIMTCAFSPSTKSIAAGGLNNFCVVYD), 104 to 133 (GHAGFVSCCKYVDDGHLLTGSGDKTCMFWD), 145 to 176 (GHEMDIVSLDFLPSNPNLFVTGGCDKLAKLWD), 188 to 218 (GNTSDINSISFFPSNADFVTGAEDGIARCFD), 231 to 260 (PSSSPINSVLFSKSGKLLFIAKDKTCEVWD), and 272 to 302 (GHENRISSLALTSDGTMLATGSWDECVRLWS).

This sequence belongs to the WD repeat G protein beta family. In terms of assembly, g proteins are composed of 3 units, alpha, beta and gamma. Binding of the beta-gamma subunit complex (git5-git11) to the alpha subunit (gpa2) facilitates interaction with GPCR git3.

The protein resides in the cell membrane. It is found in the cytoplasm. It localises to the nucleus. In terms of biological role, beta subunit of the heterotrimeric guanine nucleotide-binding protein (G protein) involved in glucose-induced cAMP signaling. The beta-gamma subunits (git5-git11) promote binding of the alpha subunit gpa2 to GPCR git3, which senses extracellular glucose, to activate cAMP-PKA signaling and repress sexual development and gluconeogenesis. The chain is Guanine nucleotide-binding protein subunit beta (git5) from Schizosaccharomyces pombe (strain 972 / ATCC 24843) (Fission yeast).